The sequence spans 559 residues: Putative protease Do-like 3, mitochondrial (559 aa).

The N-terminal 48 residues, Met1–Phe48, are a transit peptide targeting the mitochondrion. Residues Glu59–Ala81 form a disordered region. Residues Val100 to Glu292 form a serine protease region. Residues His138, Asp169, and Ser247 each act as charge relay system in the active site. The PDZ domain occupies Asn300–Glu380. A disordered region spans residues Ser538–His559. Basic residues predominate over residues Gln546–His559.

This sequence belongs to the peptidase S1C family.

It localises to the mitochondrion matrix. Functionally, putative serine protease. The polypeptide is Putative protease Do-like 3, mitochondrial (DEGP3) (Arabidopsis thaliana (Mouse-ear cress)).